Reading from the N-terminus, the 426-residue chain is MTEHTSSYYAASANKYAPFDTLNESITCDVCVVGGGYTGLSSALHLAEAGFDVVVLEASRIGFGASGRNGGQLVNSYSRDIDVIEKSYGMDTARMLGSMMFEGGEIIRERIKRYQIDCDYRPGGLFVAMNDKQLATLEEQKENWERYGNKQLELLDANAIRREVASDRYTGALLDHSGGHIHPLNLAIGEADAIRLNGGRVYELSAVTQIQHTTPAVVRTAKGQVTAKYVIVAGNAYLGDKVEPELAKRSMPCGTQVITTERLSEDLARSLIPKNYCVEDCNYLLDYYRLTADNRLLYGGGVVYGARDPDDVERLVVPKLLKTFPQLKGVKIDYRWTGNFLLTLSRMPQFGRLDTNIYYMQGYSGHGVTCTHLAGRLIAELLRGDAERFDAFANLPHYPFPGGRTLRVPFTAMGAAYYSLRDRLGV.

Belongs to the gamma-glutamylputrescine oxidoreductase family.

It carries out the reaction gamma-L-glutamylputrescine + O2 + H2O = 4-(gamma-L-glutamylamino)butanal + H2O2 + NH4(+). It participates in amine and polyamine degradation; putrescine degradation; 4-aminobutanoate from putrescine: step 2/4. Its function is as follows. Involved in the breakdown of putrescine via the oxidation of L-glutamylputrescine. This is Gamma-glutamylputrescine oxidoreductase (puuB) from Escherichia coli (strain K12).